Reading from the N-terminus, the 302-residue chain is Acidic endochitinase (302 aa).

The first 30 residues, 1–30 (MTNMTLRKHVIYFLFFISCSLSKPSDASRG), serve as a signal peptide directing secretion. The region spanning 31–302 (GIAIYWGQNG…GYSSSILASV (272 aa)) is the GH18 domain. 2 disulfides stabilise this stretch: cysteine 49–cysteine 96 and cysteine 79–cysteine 86. Catalysis depends on glutamate 156, which acts as the Proton donor. Cysteine 188 and cysteine 217 are disulfide-bonded.

It belongs to the glycosyl hydrolase 18 family. Chitinase class III subfamily.

It is found in the secreted. The protein resides in the extracellular space. The catalysed reaction is Random endo-hydrolysis of N-acetyl-beta-D-glucosaminide (1-&gt;4)-beta-linkages in chitin and chitodextrins.. This protein functions as a defense against chitin containing fungal pathogens. This is Acidic endochitinase (CHIB1) from Arabidopsis thaliana (Mouse-ear cress).